Consider the following 60-residue polypeptide: Large ribosomal subunit protein bL32 (60 aa).

The span at 1 to 19 (MAVPKRKKSKSRRNMHRSH) shows a compositional bias: basic residues. Residues 1–24 (MAVPKRKKSKSRRNMHRSHHAIEP) are disordered.

This sequence belongs to the bacterial ribosomal protein bL32 family.

The protein is Large ribosomal subunit protein bL32 of Wolbachia pipientis wMel.